A 378-amino-acid polypeptide reads, in one-letter code: SPbeta prophage-derived uncharacterized protein YorJ (378 aa).

In Bacillus subtilis (strain 168), this protein is SPbeta prophage-derived uncharacterized protein YorJ (yorJ).